Here is a 143-residue protein sequence, read N- to C-terminus: MRVYVLNGPNLGRLGTRQPEVYGTTTYADLVELCQRTGRELGLEVVVRQTDAEHELLGWLHEAADLGAAVVLNPAAWSHYSVAVRDACALLRAPLVEVHISNIHAREPFRHQSVVSAVATGVICGLGVDGYRLALYHLAARHR.

Catalysis depends on tyrosine 22, which acts as the Proton acceptor. Asparagine 73, histidine 79, and aspartate 86 together coordinate substrate. Histidine 99 acts as the Proton donor in catalysis. Substrate-binding positions include 100 to 101 (IS) and arginine 110.

This sequence belongs to the type-II 3-dehydroquinase family. Homododecamer.

It catalyses the reaction 3-dehydroquinate = 3-dehydroshikimate + H2O. The protein operates within metabolic intermediate biosynthesis; chorismate biosynthesis; chorismate from D-erythrose 4-phosphate and phosphoenolpyruvate: step 3/7. Functionally, catalyzes a trans-dehydration via an enolate intermediate. The protein is 3-dehydroquinate dehydratase of Salinispora arenicola (strain CNS-205).